The following is a 299-amino-acid chain: Pantothenate synthetase (299 aa).

41–48 is an ATP binding site; that stretch reads MGALHEGH. Histidine 48 functions as the Proton donor in the catalytic mechanism. A (R)-pantoate-binding site is contributed by glutamine 72. Glutamine 72 serves as a coordination point for beta-alanine. 158-161 contributes to the ATP binding site; sequence GQKD. (R)-pantoate is bound at residue glutamine 164. ATP contacts are provided by residues valine 187 and 195–198; that span reads MSSR.

Belongs to the pantothenate synthetase family. In terms of assembly, homodimer.

It is found in the cytoplasm. The catalysed reaction is (R)-pantoate + beta-alanine + ATP = (R)-pantothenate + AMP + diphosphate + H(+). It participates in cofactor biosynthesis; (R)-pantothenate biosynthesis; (R)-pantothenate from (R)-pantoate and beta-alanine: step 1/1. Its function is as follows. Catalyzes the condensation of pantoate with beta-alanine in an ATP-dependent reaction via a pantoyl-adenylate intermediate. The sequence is that of Pantothenate synthetase from Acidobacterium capsulatum (strain ATCC 51196 / DSM 11244 / BCRC 80197 / JCM 7670 / NBRC 15755 / NCIMB 13165 / 161).